The chain runs to 652 residues: DNA mismatch repair protein MutL (652 aa).

This sequence belongs to the DNA mismatch repair MutL/HexB family.

Functionally, this protein is involved in the repair of mismatches in DNA. It is required for dam-dependent methyl-directed DNA mismatch repair. May act as a 'molecular matchmaker', a protein that promotes the formation of a stable complex between two or more DNA-binding proteins in an ATP-dependent manner without itself being part of a final effector complex. This Aliivibrio salmonicida (strain LFI1238) (Vibrio salmonicida (strain LFI1238)) protein is DNA mismatch repair protein MutL.